Reading from the N-terminus, the 264-residue chain is Splicing factor U2af 38 kDa subunit (264 aa).

Residues 12–40 (EKDKVNCSFYFKIGACRHGDRCSRIHNKP) form a C3H1-type 1 zinc finger. S19 carries the post-translational modification Phosphoserine. Residues 44–149 (QTVLLQNLYV…RPVYSELSPV (106 aa)) enclose the RRM domain. A C3H1-type 2 zinc finger spans residues 151 to 178 (DFREACCRQYEMGECTRSGFCNFMHLKP). Positions 190–219 (RRRRARSRSRSPGRRRGSRSRSRSPGRRGG) are enriched in basic residues. A disordered region spans residues 190–264 (RRRRARSRSR…GGGGGGGGRY (75 aa)). Over residues 233-251 (NERDNMRGNDRGNDRDRRK) the composition is skewed to basic and acidic residues. Gly residues predominate over residues 253-264 (GGGGGGGGGGRY).

The protein belongs to the splicing factor SR family. As to quaternary structure, associates with a 65 kDa protein.

The protein localises to the nucleus. Necessary for the splicing of pre-mRNA. Binds to the polypyrimidine tract of introns early during spliceosome assembly. This chain is Splicing factor U2af 38 kDa subunit (U2af38), found in Drosophila melanogaster (Fruit fly).